Consider the following 226-residue polypeptide: Killer cell lectin-like receptor subfamily E member 1 (226 aa).

The interval 1 to 28 is disordered; sequence MDEAPVTRSTLNVNSQQKSKAKNKIKNT. Topologically, residues 1-68 are cytoplasmic; it reads MDEAPVTRST…GKGNCSPPWR (68 aa). Residues 7–18 are compositionally biased toward polar residues; that stretch reads TRSTLNVNSQQK. A helical; Signal-anchor for type II membrane protein membrane pass occupies residues 69-89; sequence LLSSVLGAMCLLLMAVAMVMT. At 90–226 the chain is on the extracellular side; the sequence is TFTTKSSSER…ANKLTYICKK (137 aa). Cystine bridges form between Cys-113–Cys-124, Cys-141–Cys-224, and Cys-202–Cys-216. A C-type lectin domain is found at 120-225; it reads FRCSCYFFSK…CANKLTYICK (106 aa). N-linked (GlcNAc...) asparagine glycosylation occurs at Asn-145.

As to quaternary structure, heterodimer; with KLRI1 or KLRI2. As to expression, expressed in natural killer (NK) cells (at protein level). Also detected in natural killer T (NKT) cells (at protein level). Has little or no expression in T cells (at protein level).

The protein localises to the cell membrane. Lectin-like receptor for natural killer (NK) cells. Can either inhibit or activate NK cell cytotoxic activity, depending on its binding partner. Heterodimer formation with KLRI1 mediates NK cell inhibition whereas heterodimer formation with KLRI2 mediates NK cell activation. Plays a role in allogeneic recognition by the immune system. This Mus musculus (Mouse) protein is Killer cell lectin-like receptor subfamily E member 1.